Consider the following 345-residue polypeptide: Ribosomal large subunit pseudouridine synthase B (345 aa).

Positions 1–10 (MKFTKPNSRQ) are enriched in polar residues. Residues 1–60 (MKFTKPNSRQNKPHVEQKTSRRSTNANAVASKNVKKVTEAQPKSVKASTHSVKPTVKNPL) form a disordered region. Positions 64 to 136 (EKLQKVLARA…VCRVLMYYKP (73 aa)) constitute an S4 RNA-binding domain. Aspartate 171 (nucleophile) is an active-site residue.

This sequence belongs to the pseudouridine synthase RsuA family.

It catalyses the reaction uridine(2605) in 23S rRNA = pseudouridine(2605) in 23S rRNA. Its function is as follows. Responsible for synthesis of pseudouridine from uracil-2605 in 23S ribosomal RNA. This Pasteurella multocida (strain Pm70) protein is Ribosomal large subunit pseudouridine synthase B (rluB).